The primary structure comprises 253 residues: Chitooligosaccharide deacetylase (253 aa).

2 residues coordinate Mg(2+): H61 and H126.

This sequence belongs to the YdjC deacetylase family. ChbG subfamily. Homodimer. The cofactor is Mg(2+).

It is found in the cytoplasm. It catalyses the reaction N,N'-diacetylchitobiose + H2O = N-acetyl-beta-D-glucosaminyl-(1-&gt;4)-D-glucosamine + acetate. It carries out the reaction diacetylchitobiose-6'-phosphate + H2O = N'-monoacetylchitobiose-6'-phosphate + acetate. Its pathway is glycan degradation; chitin degradation. Its function is as follows. Involved in the degradation of chitin. ChbG is essential for growth on the acetylated chitooligosaccharides chitobiose and chitotriose but is dispensable for growth on cellobiose and chitosan dimer, the deacetylated form of chitobiose. Deacetylation of chitobiose-6-P and chitotriose-6-P is necessary for both the activation of the chb promoter by the regulatory protein ChbR and the hydrolysis of phosphorylated beta-glucosides by the phospho-beta-glucosidase ChbF. Catalyzes the removal of only one acetyl group from chitobiose-6-P to yield monoacetylchitobiose-6-P, the inducer of ChbR and the substrate of ChbF. This is Chitooligosaccharide deacetylase from Serratia marcescens.